The sequence spans 157 residues: Phosphopantetheine adenylyltransferase (157 aa).

S8 is a substrate binding site. ATP-binding positions include 8 to 9 (SF) and H16. Positions 40, 72, and 86 each coordinate substrate. ATP contacts are provided by residues 87-89 (GLR), E97, and 122-128 (YSFLSSS).

It belongs to the bacterial CoaD family. Homohexamer. Mg(2+) is required as a cofactor.

The protein resides in the cytoplasm. The catalysed reaction is (R)-4'-phosphopantetheine + ATP + H(+) = 3'-dephospho-CoA + diphosphate. It functions in the pathway cofactor biosynthesis; coenzyme A biosynthesis; CoA from (R)-pantothenate: step 4/5. In terms of biological role, reversibly transfers an adenylyl group from ATP to 4'-phosphopantetheine, yielding dephospho-CoA (dPCoA) and pyrophosphate. This Gloeothece citriformis (strain PCC 7424) (Cyanothece sp. (strain PCC 7424)) protein is Phosphopantetheine adenylyltransferase.